The chain runs to 168 residues: D-aminoacyl-tRNA deacylase 2 (168 aa).

The Gly-transPro motif, allows the protein to recognize chirality of D-amino acids motif lies at 160 to 161 (GP).

It belongs to the DTD family. In terms of assembly, homodimer.

Its subcellular location is the cytoplasm. The catalysed reaction is a D-aminoacyl-tRNA + H2O = a tRNA + a D-alpha-amino acid + H(+). It carries out the reaction glycyl-tRNA(Ala) + H2O = tRNA(Ala) + glycine + H(+). It catalyses the reaction D-tyrosyl-tRNA(Tyr) + H2O = D-tyrosine + tRNA(Tyr). The enzyme catalyses L-alanyl-tRNA(Thr) + H2O = tRNA(Thr) + L-alanine + H(+). Deacylates mischarged D-aminoacyl-tRNAs. Also deacylates mischarged glycyl-tRNA(Ala), protecting cells against glycine mischarging by AlaRS. Probably acts by rejecting L-amino acids from its binding site rather than specific recognition of D-amino acids. Catalyzes the hydrolysis of D-tyrosyl-tRNA(Tyr), has no activity on correctly charged L-tyrosyl-tRNA(Tyr). By recycling D-aminoacyl-tRNA to D-amino acids and free tRNA molecules, this enzyme counteracts the toxicity associated with the formation of D-aminoacyl-tRNA entities in vivo and helps enforce protein L-homochirality. In contrast to DTD1, deacylates L-Ala mischarged on tRNA(Thr)(G4.U69) by alanine-tRNA ligase AARS. Can deacylate L-Ala due to a relaxed specificity for substrate chirality caused by the trans conformation of the Gly-Pro motif in the active site. Also hydrolyzes correctly charged, achiral, glycyl-tRNA(Gly) in vitro, although in vivo EEF1A1/EF-Tu may protect cognate achiral glycyl-tRNA(Gly) from DTD2-mediated deacetylation. The sequence is that of D-aminoacyl-tRNA deacylase 2 (DTD2) from Homo sapiens (Human).